The following is a 250-amino-acid chain: MAETAPLRVQLIAKTDFLAPPDVPWTTDADGGPALVEFAGRACYQSWSKPNPKTATNAGYLRHIIDVGHFSVLEHASVSFYITGISRSCTHELIRHRHFSYSQLSQRYVPEKDSRVVVPPGMEDDADLRHILTEAADAARATYSELLAKLEAKFADQPNAILRRKQARQAARAVLPNATETRIVVTGNYRAWRHFIAMRASEHADVEIRRLAIECLRQLAAVAPAVFADFEVTTLADGTEVATSPLATEA.

In terms of domain architecture, ThyX spans 7-233 (LRVQLIAKTD…PAVFADFEVT (227 aa)). FAD is bound by residues Ser71, 95-97 (RHR), and Gln103. Residues 92–95 (ELIR), 103–107 (QLSQR), and Arg172 each bind dUMP. Positions 95–105 (RHRHFSYSQLS) match the ThyX motif motif. Residues 188 to 190 (NYR) and His194 contribute to the FAD site. DUMP is bound at residue Arg199. Arg199 serves as the catalytic Involved in ionization of N3 of dUMP, leading to its activation.

The protein belongs to the thymidylate synthase ThyX family. In terms of assembly, homotetramer. FAD is required as a cofactor.

The catalysed reaction is dUMP + (6R)-5,10-methylene-5,6,7,8-tetrahydrofolate + NADPH + H(+) = dTMP + (6S)-5,6,7,8-tetrahydrofolate + NADP(+). The protein operates within pyrimidine metabolism; dTTP biosynthesis. Functionally, catalyzes the reductive methylation of 2'-deoxyuridine-5'-monophosphate (dUMP) to 2'-deoxythymidine-5'-monophosphate (dTMP) while utilizing 5,10-methylenetetrahydrofolate (mTHF) as the methyl donor, and NADPH and FADH(2) as the reductant. The polypeptide is Flavin-dependent thymidylate synthase (Mycobacterium bovis (strain ATCC BAA-935 / AF2122/97)).